The following is a 162-amino-acid chain: MQFDVTIEIPKGQRNKYEVDHKTGRVRLDRYLYTPMAYPTDYGFIEDTLGEDGDPLDALVLLPEPLFPGVLVEARPVGMFRMVDEHGGDDKVLCVPVNDHRWDHIHGIIDVPTFELDAIKHFFVHYKDLEPGKFVKAADWVGRDEAEAEVQRSVERFKAGGH.

Mg(2+) is bound at residue glutamate 8. The substrate site is built by lysine 16, arginine 30, and tyrosine 42. Aspartate 52, aspartate 57, aspartate 84, and aspartate 89 together coordinate Mg(2+). Catalysis depends on aspartate 89, which acts as the Proton acceptor. Residue tyrosine 126 participates in substrate binding.

Belongs to the PPase family. Homohexamer. It depends on Mg(2+) as a cofactor.

The protein localises to the cytoplasm. It catalyses the reaction diphosphate + H2O = 2 phosphate + H(+). In terms of biological role, catalyzes the hydrolysis of inorganic pyrophosphate (PPi) forming two phosphate ions. The chain is Inorganic pyrophosphatase from Mycobacterium leprae (strain TN).